The sequence spans 269 residues: [LysW]-aminoadipate kinase (269 aa).

An ATP-binding site is contributed by 5 to 8; sequence KVGG. Arg64 contributes to the substrate binding site. Tyr78 serves as a coordination point for ATP. Asn168 contacts substrate.

It belongs to the acetylglutamate kinase family. LysZ subfamily.

The protein resides in the cytoplasm. It catalyses the reaction [amino-group carrier protein]-C-terminal-N-(1,4-dicarboxybutan-1-yl)-L-glutamine + ATP = [amino-group carrier protein]-C-terminal-N-(1-carboxy-5-phosphooxy-5-oxopentan-1-yl)-L-glutamine + ADP. It participates in amino-acid biosynthesis; L-lysine biosynthesis via AAA pathway; L-lysine from L-alpha-aminoadipate (Thermus route): step 2/5. Its function is as follows. Catalyzes the phosphorylation of LysW-gamma-alpha-aminoadipate. Does not phosphorylate N-acetyl-glutamate. The chain is [LysW]-aminoadipate kinase from Thermus thermophilus (strain ATCC BAA-163 / DSM 7039 / HB27).